The primary structure comprises 183 residues: Dual-action ribosomal maturation protein DarP (183 aa).

This sequence belongs to the DarP family.

It is found in the cytoplasm. Its function is as follows. Member of a network of 50S ribosomal subunit biogenesis factors which assembles along the 30S-50S interface, preventing incorrect 23S rRNA structures from forming. Promotes peptidyl transferase center (PTC) maturation. This Escherichia coli O81 (strain ED1a) protein is Dual-action ribosomal maturation protein DarP.